The following is a 385-amino-acid chain: Di-N-acetylchitobiase (385 aa).

The signal sequence occupies residues 1-38 (MSRPQLRRWRLVSSPPSGVPGLALLALLALLALRLAAG). Residues 39–385 (TDCPCPEPEL…EVLKPKLLQR (347 aa)) enclose the GH18 domain. E143 functions as the Proton donor in the catalytic mechanism. N-linked (GlcNAc...) asparagine glycosylation is found at N193, N228, N262, and N299.

This sequence belongs to the glycosyl hydrolase 18 family.

The protein resides in the lysosome. Involved in the degradation of asparagine-linked glycoproteins. Hydrolyze of N-acetyl-beta-D-glucosamine (1-4)N-acetylglucosamine chitobiose core from the reducing end of the bond, it requires prior cleavage by glycosylasparaginase. The chain is Di-N-acetylchitobiase (CTBS) from Homo sapiens (Human).